Here is a 95-residue protein sequence, read N- to C-terminus: Large ribosomal subunit protein bL25 (95 aa).

The tract at residues 1 to 20 (MSFKFNAEVRSKQGKGASRR) is disordered.

This sequence belongs to the bacterial ribosomal protein bL25 family. As to quaternary structure, part of the 50S ribosomal subunit; part of the 5S rRNA/L5/L18/L25 subcomplex. Contacts the 5S rRNA. Binds to the 5S rRNA independently of L5 and L18.

Functionally, this is one of the proteins that binds to the 5S RNA in the ribosome where it forms part of the central protuberance. The protein is Large ribosomal subunit protein bL25 of Histophilus somni (strain 129Pt) (Haemophilus somnus).